Consider the following 106-residue polypeptide: MGFSGKTYHQFDRKFSETTEGKKCVITGISLHSTVKPISLSSSAVSNTEDEDLCPTTPTADSVRIPTVIPCPPAPKKRKLTLKVSYGPREFFSPPDLETVFIYRTT.

In terms of biological role, probable cyclin-dependent protein kinase (CDK) inhibitor that functions as a repressor of mitosis in the endoreduplication cell cycle. This chain is Cyclin-dependent protein kinase inhibitor SMR15, found in Arabidopsis thaliana (Mouse-ear cress).